Consider the following 161-residue polypeptide: Tick receptor for ospA (161 aa).

In terms of assembly, interacts with ospA protein from B.burgdorferi. Post-translationally, glycosylated. In terms of tissue distribution, specifically expressed in gut. Localizes predominantly in the intercellular spaces and luminal surface of the gut. In the gut, it localizes along tight junctions. Not expressed in salivary gland or hemolymph.

The protein localises to the cell membrane. Serves as a receptor for ospA protein of B.burgdorferi, the Lyme disease agent. Required for spirochetal colonization. Essential for pathogen adherence to the vector. The chain is Tick receptor for ospA (TROSPA) from Ixodes scapularis (Black-legged tick).